The chain runs to 451 residues: Gamma-aminobutyric acid receptor subunit alpha-2 (451 aa).

Residues 1–28 form the signal peptide; it reads MKTKLNSSNMQLLLFVFLAWDPARLVLA. At 29–249 the chain is on the extracellular side; the sequence is NIQEDEAKNN…MTAHFHLKRK (221 aa). N-linked (GlcNAc...) asparagine glycosylation is present at N38. 4-aminobutanoate is bound at residue R94. N138 carries N-linked (GlcNAc...) asparagine glycosylation. T157 lines the 4-aminobutanoate pocket. Residues C166 and C180 are joined by a disulfide bond. N201 carries an N-linked (GlcNAc...) asparagine glycan. The helical transmembrane segment at 250 to 270 threads the bilayer; the sequence is IGYFVIQTYLPCIMTVILSQV. Residues 271-280 lie on the Cytoplasmic side of the membrane; sequence SFWLNRESVP. Residues 281-300 traverse the membrane as a helical segment; sequence ARTVFGVTTVLTMTTLSISA. The Extracellular segment spans residues 301-311; sequence RNSLPKVAYAT. Residues 312-332 traverse the membrane as a helical segment; the sequence is AMDWFIAVCYAFVFSALIEFA. The Cytoplasmic portion of the chain corresponds to 333 to 420; sequence TVNYFTKRGW…FNSVSKIDRM (88 aa). A helical membrane pass occupies residues 421-441; it reads SRIVFPVLFGTFNLVYWATYL. Over 442-451 the chain is Extracellular; that stretch reads NREPVLGVSP.

Belongs to the ligand-gated ion channel (TC 1.A.9) family. Gamma-aminobutyric acid receptor (TC 1.A.9.5) subfamily. GABRA2 sub-subfamily. As to quaternary structure, heteropentamer, formed by a combination of alpha (GABRA1-6), beta (GABRB1-3), gamma (GABRG1-3), delta (GABRD), epsilon (GABRE), rho (GABRR1-3), pi (GABRP) and theta (GABRQ) subunits, each subunit exhibiting distinct physiological and pharmacological properties. Interacts with UBQLN1. Interacts with KIF21B. Interacts with LHFPL4. Interacts with SHISA7; interaction leads to the regulation of GABA(A) receptor trafficking, channel deactivation kinetics and pharmacology. Post-translationally, glycosylated.

Its subcellular location is the postsynaptic cell membrane. The protein localises to the cell membrane. It localises to the cytoplasmic vesicle membrane. It is found in the cell projection. The protein resides in the dendrite. It catalyses the reaction chloride(in) = chloride(out). With respect to regulation, activated by pentobarbital. Inhibited by the antagonist bicuculline. Functionally, alpha subunit of the heteropentameric ligand-gated chloride channel gated by gamma-aminobutyric acid (GABA), a major inhibitory neurotransmitter in the brain. GABA-gated chloride channels, also named GABA(A) receptors (GABAAR), consist of five subunits arranged around a central pore and contain GABA active binding site(s) located at the alpha and beta subunit interface(s). When activated by GABA, GABAARs selectively allow the flow of chloride anions across the cell membrane down their electrochemical gradient. Chloride influx into the postsynaptic neuron following GABAAR opening decreases the neuron ability to generate a new action potential, thereby reducing nerve transmission. The alpha-2 subunit exhibits synaptogenic activity together with beta-2 and very little to no activity together with beta-3, the gamma-2 subunit being necessary but not sufficient to induce rapid synaptic contacts formation. This Bos taurus (Bovine) protein is Gamma-aminobutyric acid receptor subunit alpha-2 (GABRA2).